The sequence spans 406 residues: Purine nucleoside permease (406 aa).

The signal sequence occupies residues 1–22 (MKLSTLFTLATTISTLTTFTIA).

It belongs to the NUP family. Post-translationally, predicted to be a substrate for cleavage by KEX2.

Its activity is regulated as follows. Mammalian nucleoside transport inhibitors dipyridamole and NBMPR inhibit adenosine transport by NUP. Its function is as follows. Nucleoside permease that transports adenosine and guanosine. Does not show any transport activities towards cytidine, adenine, guanine, uridine, and uracil. The polypeptide is Purine nucleoside permease (Candida albicans (strain SC5314 / ATCC MYA-2876) (Yeast)).